Reading from the N-terminus, the 265-residue chain is Thiamine thiazole synthase (265 aa).

Residues alanine 43, 62-63 (ER), glycine 70, valine 134, and 162-164 (HVD) contribute to the NAD(+) site. The Fe cation site is built by aspartate 164 and histidine 179. Residue methionine 229 participates in NAD(+) binding. Glycine is bound at residue arginine 239.

This sequence belongs to the THI4 family. Homooctamer; tetramer of dimers. Fe(2+) is required as a cofactor.

It carries out the reaction hydrogen sulfide + glycine + NAD(+) = ADP-5-ethyl-4-methylthiazole-2-carboxylate + nicotinamide + 3 H2O + H(+). It participates in cofactor biosynthesis; thiamine diphosphate biosynthesis. Functionally, involved in the biosynthesis of the thiazole moiety of thiamine. Catalyzes the conversion of NAD and glycine to adenosine diphosphate 5-(2-hydroxyethyl)-4-methylthiazole-2-carboxylate (ADT), an adenylated thiazole intermediate, using free sulfide as a source of sulfur. The sequence is that of Thiamine thiazole synthase from Sulfolobus acidocaldarius (strain ATCC 33909 / DSM 639 / JCM 8929 / NBRC 15157 / NCIMB 11770).